Here is a 356-residue protein sequence, read N- to C-terminus: MAGLKLQAVTKSWDGKTQVIKPLTLDVADGEFIVMVGPSGCGKSTLLRMVAGLERVTTGDIWIDRKRVTEMEPKDRGIAMVFQNYALYPHMSVEENMAWGLKIRGMGKQQIAERVKEAARILELDGLLKRRPRELSGGQRQRVAMGRAIVREPAVFLFDEPLSNLDAKLRVQMRLELQQLHRRLKTTSLYVTHDQVEAMTLAQRVMVMNGGVAEQIGTPVEVYEKPASLFVASFIGSPAMNLLAGRVNNEGTHFELDGGITLPLNGGYRQYAGRKMTLGIRPEHIALSLQAEGGVPLVMDTLEILGADNLAHGRWGEQKLVVRLAHQERPTAGSTLWLHLPENQLHLFDGETGQRV.

An ABC transporter domain is found at 4–235 (LKLQAVTKSW…PASLFVASFI (232 aa)). 37 to 44 (GPSGCGKS) contributes to the ATP binding site.

It belongs to the ABC transporter superfamily. sn-glycerol-3-phosphate importer (TC 3.A.1.1.3) family. The complex is composed of two ATP-binding proteins (UgpC), two transmembrane proteins (UgpA and UgpE) and a solute-binding protein (UgpB).

It localises to the cell inner membrane. The catalysed reaction is sn-glycerol 3-phosphate(out) + ATP + H2O = sn-glycerol 3-phosphate(in) + ADP + phosphate + H(+). Its function is as follows. Part of the ABC transporter complex UgpBAEC involved in sn-glycerol-3-phosphate (G3P) import. Responsible for energy coupling to the transport system. The polypeptide is sn-glycerol-3-phosphate import ATP-binding protein UgpC (Escherichia coli O6:H1 (strain CFT073 / ATCC 700928 / UPEC)).